The primary structure comprises 207 residues: Fibronectin type III domain-containing protein 5b (207 aa).

The signal sequence occupies residues 1–26 (MWGIKGSFAVLLLLFLAYIFASSVNA). Topologically, residues 27–146 (DSLSAPLNVT…EEVGQAAQLR (120 aa)) are extracellular. The Fibronectin type-III domain occupies 31–122 (APLNVTIKAL…EPVLFRTPKE (92 aa)). Asn-34 and Asn-79 each carry an N-linked (GlcNAc...) asparagine glycan. A helical transmembrane segment spans residues 147 to 167 (AGELIIIVVVLVMWAGVIALF). Over 168 to 207 (CRQYDIIKDNEPNNNKDKAKNSSECSTPEHPTGGLLRSKV) the chain is Cytoplasmic. The span at 178-188 (EPNNNKDKAKN) shows a compositional bias: basic and acidic residues. Residues 178–207 (EPNNNKDKAKNSSECSTPEHPTGGLLRSKV) are disordered. The Microbody targeting signal motif lies at 205-207 (SKV).

In terms of assembly, dimer; may exist in other oligomeric forms. The extracellular domain is cleaved and released from the cell membrane.

The protein resides in the cell membrane. It localises to the peroxisome membrane. It is found in the secreted. May mediate beneficial effects of muscular exercise. The chain is Fibronectin type III domain-containing protein 5b (fndc5b) from Danio rerio (Zebrafish).